A 1705-amino-acid polypeptide reads, in one-letter code: Intersectin-1 (1705 aa).

2 consecutive EH domains span residues 21–109 (ERAK…PVAM) and 220–309 (SRLK…SFRR). 2 EF-hand domains span residues 53–88 (LPQPVLAQIWALADMNNDGRMDQLEFSIAMKLIKLK) and 253–288 (LPQSQLATIWNLSDIDQDGKLTAEEFILAMHLIDVA). Ca(2+) contacts are provided by Asp66, Asn68, Asp70, Arg72, Glu77, Asp266, Asp268, Asp270, Lys272, and Glu277. Disordered stretches follow at residues 322-355 (VSVDQRLPEEPEEEEPQNADKKLPVTFEDKKREN), 386-433 (RAEQ…ERRE), and 668-708 (RYKF…PPEP). Residues 325 to 697 (DQRLPEEPEE…VEKKPEIQEK (373 aa)) are KLERQ. Residues 339–355 (NADKKLPVTFEDKKREN) show a composition bias toward basic and acidic residues. Positions 350–687 (DKKRENFERG…KREESIQKCE (338 aa)) form a coiled coil. The segment covering 668 to 699 (RYKFQDEEKEKREESIQKCEVEKKPEIQEKPN) has biased composition (basic and acidic residues). The region spanning 732 to 793 (VKVVYYRALY…PANYAERMPE (62 aa)) is the SH3 1 domain. The span at 823 to 833 (AFTNTSTNSNN) shows a compositional bias: low complexity. Positions 823–851 (AFTNTSTNSNNWADFSSTWPTNNTDKVES) are disordered. Residues 834–846 (WADFSSTWPTNNT) are compositionally biased toward polar residues. The SH3 2 domain occupies 897-955 (VEGLQAQALYPWRAKKDNHLNFNKNDVITVLEQQDMWWFGEVQGQKGWFPKSYVKLISG). The segment at 959–978 (KSTSIDSTSSESPASLKRVS) is disordered. Residues 960–973 (STSIDSTSSESPAS) show a composition bias toward low complexity. SH3 domains are found at residues 986–1044 (IQGE…PKDS), 1058–1122 (KKPE…LLSP), and 1139–1198 (PPTC…LTTD). The Bipartite nuclear localization signal; in isoform 2 motif lies at 1088–1111 (RKKNPGGWWEGELQARGKKRQIGW). Residues 1221-1407 (KRQGYIHELI…EELCSQVNEG (187 aa)) enclose the DH domain. Residues 1446 to 1555 (KFLHSGKLYK…WVQKIKAASE (110 aa)) enclose the PH domain. A C2 domain is found at 1563–1679 (KKREKAYLVR…KKDQGSKGPV (117 aa)). Ca(2+) is bound by residues Asp1651, Ser1654, and Asp1657.

Binds epn1 and epn2. Ca(2+) serves as cofactor.

It is found in the endomembrane system. Its subcellular location is the synapse. The protein resides in the synaptosome. The protein localises to the cell projection. It localises to the lamellipodium. It is found in the cell membrane. Its subcellular location is the membrane. The protein resides in the clathrin-coated pit. The protein localises to the recycling endosome. It localises to the cytoplasm. It is found in the nucleus envelope. Adapter protein that provides a link between the endocytic membrane traffic and the actin assembly machinery. Acts as a guanine nucleotide exchange factor (GEF) for cdc42, and thereby stimulates actin nucleation mediated by wasl and the arp2/3 complex. Involved in endocytosis of activated egfr, and probably also other growth factor receptors. This is Intersectin-1 (itsn1) from Xenopus laevis (African clawed frog).